The chain runs to 476 residues: Chromosomal replication initiator protein DnaA (476 aa).

Residues 1-87 (MSESSHVGLW…LMYNVLVDKS (87 aa)) are domain I, interacts with DnaA modulators. The domain II stretch occupies residues 87-130 (SSGATVNQESTTRSTAIPQSGLPRVDERKAPGLLRAPAVQDLDP). The tract at residues 131–348 (HLNPNYNFET…GIVISIMAHS (218 aa)) is domain III, AAA+ region. Residues glycine 176, glycine 178, lysine 179, and threonine 180 each contribute to the ATP site. The segment at 349–476 (TIYNKEIDLD…KKRNVSNGER (128 aa)) is domain IV, binds dsDNA.

Belongs to the DnaA family. As to quaternary structure, oligomerizes as a right-handed, spiral filament on DNA at oriC.

It localises to the cytoplasm. Plays an essential role in the initiation and regulation of chromosomal replication. ATP-DnaA binds to the origin of replication (oriC) to initiate formation of the DNA replication initiation complex once per cell cycle. Binds the DnaA box (a 9 base pair repeat at the origin) and separates the double-stranded (ds)DNA. Forms a right-handed helical filament on oriC DNA; dsDNA binds to the exterior of the filament while single-stranded (ss)DNA is stabiized in the filament's interior. The ATP-DnaA-oriC complex binds and stabilizes one strand of the AT-rich DNA unwinding element (DUE), permitting loading of DNA polymerase. After initiation quickly degrades to an ADP-DnaA complex that is not apt for DNA replication. Binds acidic phospholipids. The polypeptide is Chromosomal replication initiator protein DnaA (Bacteroides fragilis (strain YCH46)).